The chain runs to 225 residues: Uridylate kinase (225 aa).

Mg(2+) is bound at residue D6. 9-10 is an ATP binding site; it reads GS. Residue G44 coordinates UMP. Positions 45 and 49 each coordinate ATP. Residues D66 and 114–120 contribute to the UMP site; that span reads THPGHTT. Mg(2+) contacts are provided by T120 and D121. Positions 140, 141, 146, and 149 each coordinate ATP. Position 179 (G179) interacts with UMP. S182 lines the Mg(2+) pocket. Residue S182 coordinates ATP.

It belongs to the UMP kinase family. As to quaternary structure, homohexamer; trimer of dimers.

It is found in the cytoplasm. The catalysed reaction is UMP + ATP = UDP + ADP. The protein operates within pyrimidine metabolism; CTP biosynthesis via de novo pathway; UDP from UMP (UMPK route): step 1/1. With respect to regulation, inhibited by UTP. Its function is as follows. Catalyzes the reversible phosphorylation of UMP to UDP, with ATP as the most efficient phosphate donor. In Pyrococcus furiosus (strain ATCC 43587 / DSM 3638 / JCM 8422 / Vc1), this protein is Uridylate kinase (pyrH).